The following is a 255-amino-acid chain: Tablysin 15 (255 aa).

The first 23 residues, 1-23 (MTSIPVSSFLLAALVLQYATSDA), serve as a signal peptide directing secretion. 3 disulfides stabilise this stretch: Cys27–Cys40, Cys31–Cys117, and Cys49–Cys110. A Cell attachment site motif is present at residues 32 to 34 (RGD). The SCP domain maps to 67–211 (LSKINDVRDH…KARALLTCNF (145 aa)). Positions 82, 153, and 156 each coordinate leukotriene E4. Intrachain disulfides connect Cys192–Cys209 and Cys232–Cys243.

This sequence belongs to the CRISP family. Expressed in salivary glands.

Its subcellular location is the secreted. Its function is as follows. Anti-inflammatory scavenger of eicosanoids and antithrombotic protein that inhibits platelets aggregation induced by collagen, ADP and convulxin (GPVI agonist). Exhibits high affinity binding for glycoprotein IIb-IIIa receptor (ITGA2B/ITGB3) and endothelial cell alphaVbeta3 (ITGAV/ITGB3) integrins, but not for alpha-5/beta-1 or alpha-2/beta-1. Accordingly, it blocks endothelial cell adhesion to vitronectin (IC(50)~1 nM) and marginally to fibronectin (IC(50)~1 uM), but not to collagen. It also inhibits fibroblast growth factor (FGF)-induced endothelial cell proliferation, and attenuates tube formation in vitro. In addition, it dose-dependently attenuates thrombus formation to collagen under flow. Also binds proinflammatory cysteinyl leukotrienes (leukotrienes C4 (LTC4), D4 (LTD4) and E4 (LTE4)) with submicromolar affinities. This Tabanus yao (Horsefly) protein is Tablysin 15.